A 269-amino-acid chain; its full sequence is Aminoglycoside N(3)-acetyltransferase III (269 aa).

It belongs to the antibiotic N-acetyltransferase family.

It catalyses the reaction a 2-deoxystreptamine antibiotic + acetyl-CoA = an N(3)-acetyl-2-deoxystreptamine antibiotic + CoA + H(+). Functionally, resistance to antibiotics containing the 2-deoxy-streptamine ring including gentamicin, kanamycin, tobramycin, neomycin and apramycin. In Serratia marcescens, this protein is Aminoglycoside N(3)-acetyltransferase III (aac3-Vb).